The sequence spans 159 residues: 6,7-dimethyl-8-ribityllumazine synthase (159 aa).

5-amino-6-(D-ribitylamino)uracil-binding positions include Phe-22, 56 to 58 (AFE), and 80 to 82 (AVI). 85–86 (AT) provides a ligand contact to (2S)-2-hydroxy-3-oxobutyl phosphate. The active-site Proton donor is the His-88. Phe-113 contributes to the 5-amino-6-(D-ribitylamino)uracil binding site. (2S)-2-hydroxy-3-oxobutyl phosphate is bound at residue Arg-127.

The protein belongs to the DMRL synthase family.

It carries out the reaction (2S)-2-hydroxy-3-oxobutyl phosphate + 5-amino-6-(D-ribitylamino)uracil = 6,7-dimethyl-8-(1-D-ribityl)lumazine + phosphate + 2 H2O + H(+). It participates in cofactor biosynthesis; riboflavin biosynthesis; riboflavin from 2-hydroxy-3-oxobutyl phosphate and 5-amino-6-(D-ribitylamino)uracil: step 1/2. In terms of biological role, catalyzes the formation of 6,7-dimethyl-8-ribityllumazine by condensation of 5-amino-6-(D-ribitylamino)uracil with 3,4-dihydroxy-2-butanone 4-phosphate. This is the penultimate step in the biosynthesis of riboflavin. The chain is 6,7-dimethyl-8-ribityllumazine synthase from Lactiplantibacillus plantarum (strain ATCC BAA-793 / NCIMB 8826 / WCFS1) (Lactobacillus plantarum).